Reading from the N-terminus, the 148-residue chain is Putative pre-16S rRNA nuclease (148 aa).

This sequence belongs to the YqgF nuclease family.

The protein resides in the cytoplasm. Its function is as follows. Could be a nuclease involved in processing of the 5'-end of pre-16S rRNA. The chain is Putative pre-16S rRNA nuclease from Colwellia psychrerythraea (strain 34H / ATCC BAA-681) (Vibrio psychroerythus).